Here is a 406-residue protein sequence, read N- to C-terminus: 5-hydroxytryptamine receptor 4 (406 aa).

Residues 1–19 are Extracellular-facing; sequence MDRLDANVSSNEGFGSVEK. An N-linked (GlcNAc...) asparagine glycan is attached at Asn7. The chain crosses the membrane as a helical span at residues 20-44; that stretch reads VVLLTFFAMVILMAILGNLLVMVAV. Over 45 to 54 the chain is Cytoplasmic; the sequence is CRDRQLRKIK. The helical transmembrane segment at 55–78 threads the bilayer; it reads TNYFIVSLAFADLLVSVLVNAFGA. The Extracellular portion of the chain corresponds to 79-92; that stretch reads IELVQDIWFYGEMF. The chain crosses the membrane as a helical span at residues 93 to 117; the sequence is CLVRTSLDVLLTTASIFHLCCISLD. Cys93 and Cys184 are oxidised to a cystine. Serotonin is bound at residue Asp100. Topologically, residues 118–133 are cytoplasmic; that stretch reads RYYAICCQPLVYRNKM. A helical membrane pass occupies residues 134-157; sequence TPLRIALMLGGCWVIPMFISFLPI. The Extracellular segment spans residues 158 to 188; it reads MQGWNNIGIVDVIEKRKFNHNSNSTFCVFMV. A helical membrane pass occupies residues 189–212; that stretch reads NKPYAITCSVVAFYIPFLLMVLAY. Residues 213-257 lie on the Cytoplasmic side of the membrane; the sequence is YRIYVTAKEHAQQIQMLQRAGATSESRPQTADQHSTHRMRTETKA. The chain crosses the membrane as a helical span at residues 258–283; the sequence is AKTLCVIMGCFCFCWAPFFVTNIVDP. Asn279 contributes to the serotonin binding site. Over 284 to 290 the chain is Extracellular; sequence FIDYTVP. The chain crosses the membrane as a helical span at residues 291-314; it reads EKVWTAFLWLGYINSGLNPFLYAF. Over 315–406 the chain is Cytoplasmic; sequence LNKSFRRAFL…DSCSLKRSQS (92 aa).

It belongs to the G-protein coupled receptor 1 family. In terms of assembly, interacts (via C-terminus 330-346 AA) with GRK5; this interaction is promoted by 5-HT (serotonin). In terms of tissue distribution, in brain, isoform 5-HT4S is restricted to the striatum. In peripheral tissues, differential expression is also observed in the atrium of the heart where only isoform 5-HT4S is detectable. In brain, isoform 5-HT4L is expressed throughout the brain, except in the cerebellum.

It localises to the cell membrane. The protein resides in the endosome membrane. Its function is as follows. G-protein coupled receptor for 5-hydroxytryptamine (serotonin), a biogenic hormone that functions as a neurotransmitter, a hormone and a mitogen. Ligand binding causes a conformation change that triggers signaling via guanine nucleotide-binding proteins (G proteins) and modulates the activity of downstream effectors. HTR4 is coupled to G(s) G alpha proteins and mediates activation of adenylate cyclase activity. The protein is 5-hydroxytryptamine receptor 4 (Htr4) of Rattus norvegicus (Rat).